Reading from the N-terminus, the 119-residue chain is Immunoglobulin heavy variable 2-5 (119 aa).

Residues 1 to 19 (MDTLCSTLLLLTIPSWVLS) form the signal peptide. Gln20 is subject to Pyrrolidone carboxylic acid. The interval 20–44 (QITLKESGPTLVKPTQTLTLTCTFS) is framework-1. Residues 20-119 (QITLKESGPT…DTATYYCAHR (100 aa)) form the Ig-like domain. Cys41 and Cys116 are disulfide-bonded. The complementarity-determining-1 stretch occupies residues 45–54 (GFSLSTSGVG). Positions 55–71 (VGWIRQPPGKALEWLAL) are framework-2. A complementarity-determining-2 region spans residues 72–78 (IYWDDDK). The tract at residues 79–116 (RYSPSLKSRLTITKDTSKNQVVLTMTNMDPVDTATYYC) is framework-3. The tract at residues 117-119 (AHR) is complementarity-determining-3.

Immunoglobulins are composed of two identical heavy chains and two identical light chains; disulfide-linked.

It is found in the secreted. It localises to the cell membrane. Functionally, v region of the variable domain of immunoglobulin heavy chains that participates in the antigen recognition. Immunoglobulins, also known as antibodies, are membrane-bound or secreted glycoproteins produced by B lymphocytes. In the recognition phase of humoral immunity, the membrane-bound immunoglobulins serve as receptors which, upon binding of a specific antigen, trigger the clonal expansion and differentiation of B lymphocytes into immunoglobulins-secreting plasma cells. Secreted immunoglobulins mediate the effector phase of humoral immunity, which results in the elimination of bound antigens. The antigen binding site is formed by the variable domain of one heavy chain, together with that of its associated light chain. Thus, each immunoglobulin has two antigen binding sites with remarkable affinity for a particular antigen. The variable domains are assembled by a process called V-(D)-J rearrangement and can then be subjected to somatic hypermutations which, after exposure to antigen and selection, allow affinity maturation for a particular antigen. In Homo sapiens (Human), this protein is Immunoglobulin heavy variable 2-5.